We begin with the raw amino-acid sequence, 937 residues long: Translation initiation factor IF-2 (937 aa).

2 disordered regions span residues Lys157–Lys230 and Ile250–Phe346. Over residues Glu173–Lys205 the composition is skewed to basic and acidic residues. The segment covering Ala252–Glu265 has biased composition (low complexity). Residues Thr267 to Ser293 show a composition bias toward basic and acidic residues. The segment covering Lys295–Gln304 has biased composition (polar residues). In terms of domain architecture, tr-type G spans Pro437 to Lys606. The interval Gly446 to Thr453 is G1. A GTP-binding site is contributed by Gly446–Thr453. Residues Gly471–His475 are G2. Residues Asp492–Gly495 form a G3 region. GTP contacts are provided by residues Asp492–His496 and Asn546–Asp549. The G4 stretch occupies residues Asn546–Asp549. Residues Ser582–Lys584 form a G5 region.

It belongs to the TRAFAC class translation factor GTPase superfamily. Classic translation factor GTPase family. IF-2 subfamily.

The protein resides in the cytoplasm. One of the essential components for the initiation of protein synthesis. Protects formylmethionyl-tRNA from spontaneous hydrolysis and promotes its binding to the 30S ribosomal subunits. Also involved in the hydrolysis of GTP during the formation of the 70S ribosomal complex. This Janthinobacterium sp. (strain Marseille) (Minibacterium massiliensis) protein is Translation initiation factor IF-2.